The primary structure comprises 38 residues: Photosystem II reaction center protein L (38 aa).

The helical transmembrane segment at 17–37 threads the bilayer; sequence SLYWGLLLIFVLAILFSSYIF.

The protein belongs to the PsbL family. PSII is composed of 1 copy each of membrane proteins PsbA, PsbB, PsbC, PsbD, PsbE, PsbF, PsbH, PsbI, PsbJ, PsbK, PsbL, PsbM, PsbT, PsbX, PsbY, PsbZ, Psb30/Ycf12, at least 3 peripheral proteins of the oxygen-evolving complex and a large number of cofactors. It forms dimeric complexes.

Its subcellular location is the plastid. It is found in the chloroplast thylakoid membrane. Its function is as follows. One of the components of the core complex of photosystem II (PSII). PSII is a light-driven water:plastoquinone oxidoreductase that uses light energy to abstract electrons from H(2)O, generating O(2) and a proton gradient subsequently used for ATP formation. It consists of a core antenna complex that captures photons, and an electron transfer chain that converts photonic excitation into a charge separation. This subunit is found at the monomer-monomer interface and is required for correct PSII assembly and/or dimerization. This is Photosystem II reaction center protein L from Nephroselmis olivacea (Green alga).